The sequence spans 306 residues: Glutathione transport system permease protein GsiC (306 aa).

Residues 1–8 (MLNYVIKR) lie on the Cytoplasmic side of the membrane. Residues 9 to 29 (LLGLIPTLFIVSVLVFLFVHM) traverse the membrane as a helical segment. The Periplasmic segment spans residues 30–102 (LPGDPARLIA…SRFMPTLWLT (73 aa)). Residues 95–292 (FMPTLWLTIT…LEFILINLVV (198 aa)) form the ABC transmembrane type-1 domain. The chain crosses the membrane as a helical span at residues 103–123 (ITSMVWAVIFGMAAGIIAAVW). The Cytoplasmic portion of the chain corresponds to 124–134 (RNRWPDRLSMT). Residues 135-155 (IAVSGISFPAFALGMLLIQVF) form a helical membrane-spanning segment. The Periplasmic segment spans residues 156–168 (SVELGWLPTVGAD). The helical transmembrane segment at 169-189 (SWQHYILPSLTLGAAVAAVMA) threads the bilayer. Residues 190-228 (RFTRASFVDVLSEDYMRTARAKGVSETWVVLKHGLRNAM) are Cytoplasmic-facing. The chain crosses the membrane as a helical span at residues 229-249 (IPVVTMMGLQFGFLLGGSIVV). Over 250–277 (EKVFNWPGLGRLLVDSVEMRDYPVIQAE) the chain is Periplasmic. Residues 278 to 298 (ILLFSLEFILINLVVDVLYAA) form a helical membrane-spanning segment. The Cytoplasmic portion of the chain corresponds to 299–306 (INPAIRYK).

This sequence belongs to the binding-protein-dependent transport system permease family. The complex is composed of two ATP-binding proteins (GsiA), two transmembrane proteins (GsiC and GsiD) and a solute-binding protein (GsiB).

Its subcellular location is the cell inner membrane. Part of the ABC transporter complex GsiABCD involved in glutathione import. Probably responsible for the translocation of the substrate across the membrane. The sequence is that of Glutathione transport system permease protein GsiC from Escherichia coli O6:H1 (strain CFT073 / ATCC 700928 / UPEC).